An 849-amino-acid polypeptide reads, in one-letter code: Probable ubiquitin carboxyl-terminal hydrolase 1 (849 aa).

A DUSP domain is found at 20 to 120 (QPASLPFQDS…EGLAIERKVL (101 aa)). Residues 279 to 848 (CGLYNLGNSC…SAYVLFYRAK (570 aa)) form the USP domain. C288 acts as the Nucleophile in catalysis. Residue H806 is the Proton acceptor of the active site.

Belongs to the peptidase C19 family.

It carries out the reaction Thiol-dependent hydrolysis of ester, thioester, amide, peptide and isopeptide bonds formed by the C-terminal Gly of ubiquitin (a 76-residue protein attached to proteins as an intracellular targeting signal).. This chain is Probable ubiquitin carboxyl-terminal hydrolase 1 (ubp1), found in Schizosaccharomyces pombe (strain 972 / ATCC 24843) (Fission yeast).